The primary structure comprises 85 residues: Small ribosomal subunit protein uS17 (85 aa).

This sequence belongs to the universal ribosomal protein uS17 family. Part of the 30S ribosomal subunit.

In terms of biological role, one of the primary rRNA binding proteins, it binds specifically to the 5'-end of 16S ribosomal RNA. This Mycoplasma capricolum subsp. capricolum (strain California kid / ATCC 27343 / NCTC 10154) protein is Small ribosomal subunit protein uS17.